Here is a 289-residue protein sequence, read N- to C-terminus: HTH-type transcriptional regulator SoxR (289 aa).

Positions 1–58 (MEIKDLQIFQKVVEYGSVSKAAKSLNYVQSYVTVRIQKLEEELQTELFHRSSRGMVLN) constitute an HTH lysR-type domain. A DNA-binding region (H-T-H motif) is located at residues 18–37 (VSKAAKSLNYVQSYVTVRIQ).

Belongs to the LysR transcriptional regulatory family.

Functionally, transcriptional repressor of soxA gene expression. In Arthrobacter sp. (strain TE1826), this protein is HTH-type transcriptional regulator SoxR (soxR).